We begin with the raw amino-acid sequence, 178 residues long: MPGSALLCCLLLLTGMRISRGQYSREDNNCTHFPVGQSHMLLELRTAFSQVKTFFQTKDQLDNILLTDSLMQDFKGYLGCQALSEMIQFYLVEVMPQAEKHGPEIKEHLNSLGEKLKTLRMRLRRCHRFLPCENKSKAVEQVKSDFNKLQDQGVYKAMNEFDIFINCIEAYMMIKMKS.

A signal peptide spans 1–18 (MPGSALLCCLLLLTGMRI). An N-linked (GlcNAc...) asparagine glycan is attached at N29. 2 disulfide bridges follow: C30–C126 and C80–C132. N-linked (GlcNAc...) asparagine glycosylation occurs at N134.

This sequence belongs to the IL-10 family. As to quaternary structure, homodimer. Interacts with IL10RA and IL10RB.

Its subcellular location is the secreted. Its function is as follows. Major immune regulatory cytokine that acts on many cells of the immune system where it has profound anti-inflammatory functions, limiting excessive tissue disruption caused by inflammation. Mechanistically, IL10 binds to its heterotetrameric receptor comprising IL10RA and IL10RB leading to JAK1 and STAT2-mediated phosphorylation of STAT3. In turn, STAT3 translocates to the nucleus where it drives expression of anti-inflammatory mediators. Targets antigen-presenting cells (APCs) such as macrophages and monocytes and inhibits their release of pro-inflammatory cytokines including granulocyte-macrophage colony-stimulating factor /GM-CSF, granulocyte colony-stimulating factor/G-CSF, IL-1 alpha, IL-1 beta, IL-6, IL-8 and TNF-alpha. Also interferes with antigen presentation by reducing the expression of MHC-class II and co-stimulatory molecules, thereby inhibiting their ability to induce T cell activation. In addition, controls the inflammatory response of macrophages by reprogramming essential metabolic pathways including mTOR signaling. In Mus musculus (Mouse), this protein is Interleukin-10 (Il10).